Consider the following 168-residue polypeptide: Phosphopantetheine adenylyltransferase (168 aa).

Thr-10 is a substrate binding site. Residues Thr-10–Phe-11 and His-18 contribute to the ATP site. 3 residues coordinate substrate: Lys-42, Leu-74, and Arg-88. Residues Gly-89 to Arg-91, Glu-99, and Asn-124 to Thr-130 contribute to the ATP site.

This sequence belongs to the bacterial CoaD family. Homohexamer. Mg(2+) serves as cofactor.

Its subcellular location is the cytoplasm. The catalysed reaction is (R)-4'-phosphopantetheine + ATP + H(+) = 3'-dephospho-CoA + diphosphate. It functions in the pathway cofactor biosynthesis; coenzyme A biosynthesis; CoA from (R)-pantothenate: step 4/5. In terms of biological role, reversibly transfers an adenylyl group from ATP to 4'-phosphopantetheine, yielding dephospho-CoA (dPCoA) and pyrophosphate. The protein is Phosphopantetheine adenylyltransferase of Shewanella denitrificans (strain OS217 / ATCC BAA-1090 / DSM 15013).